A 745-amino-acid polypeptide reads, in one-letter code: MESNNGIILRVAEANSTDPGMSRVRLDESSRRLLDAEIGDVVEIEKVRKTVGRVYRARPEDENKGIVRIDSVMRNNCGASIGDKVKVRKVRTEIAKKVTLAPIIRKDQRLKFGEGIEEYVQRALIRRPMLEQDNISVPGLTLAGQTGLLFKVVKTLPSKVPVEIGEETKIEIREEPASEVLEEVSRISYEDIGGLSEQLGKIREMIELPLKHPELFERLGITPPKGVILYGPPGTGKTLIARAVANESGANFLSINGPEIMSKYYGQSEQKLREIFSKAEETAPSIIFIDEIDSIAPKREEVQGEVERRVVAQLLTLMDGMKERGHVIVIGATNRIDAIDPALRRPGRFDREIEIGVPDRNGRKEILMIHTRNMPLGMSEEEKNKFLEEMADYTYGFVGADLAALVRESAMNALRRYLPEIDLDKPIPTEILEKMVVTEDDFKNALKSIEPSSLREVMVEVPNVHWDDIGGLEDVKREIKETVELPLLKPDVFKRLGIRPSKGFLLYGPPGVGKTLLAKAVATESNANFISIKGPEVLSKWVGESEKAIREIFKKAKQVAPAIVFLDEIDSIAPRRGTTSDSGVTERIVNQLLTSLDGIEVMNGVVVIGATNRPDIMDPALLRAGRFDKLIYIPPPDKEARLSILKVHTKNMPLAPDVDLNDIAQRTEGYVGADLENLCREAGMNAYRENPDATSVSQKNFLDALKTIRPSVDEEVIKFYRTLSETMSKSVSERRKQLQDQGLYL.

ATP is bound by residues 231–238 (GPPGTGKT) and 508–515 (GPPGVGKT).

This sequence belongs to the AAA ATPase family. CDC48 subfamily. Homohexamer. Forms a ring-shaped particle.

The protein is VCP-like ATPase (vat) of Thermoplasma acidophilum (strain ATCC 25905 / DSM 1728 / JCM 9062 / NBRC 15155 / AMRC-C165).